Here is a 171-residue protein sequence, read N- to C-terminus: Shikimate kinase (171 aa).

14–19 (GAGKST) contributes to the ATP binding site. Residue Ser-18 participates in Mg(2+) binding. Positions 36, 60, and 82 each coordinate substrate. ATP is bound at residue Arg-120. A substrate-binding site is contributed by Arg-139. Gln-156 contacts ATP.

Belongs to the shikimate kinase family. In terms of assembly, monomer. The cofactor is Mg(2+).

It is found in the cytoplasm. It catalyses the reaction shikimate + ATP = 3-phosphoshikimate + ADP + H(+). It functions in the pathway metabolic intermediate biosynthesis; chorismate biosynthesis; chorismate from D-erythrose 4-phosphate and phosphoenolpyruvate: step 5/7. In terms of biological role, catalyzes the specific phosphorylation of the 3-hydroxyl group of shikimic acid using ATP as a cosubstrate. The sequence is that of Shikimate kinase from Shewanella amazonensis (strain ATCC BAA-1098 / SB2B).